The sequence spans 399 residues: Centrosomal protein 43 (399 aa).

The LisH domain occupies 70 to 102 (DGRLVASLVAEFLQFFNLDFTLAVFQPETSTLQ). Disordered stretches follow at residues 139–218 (EKGP…SSLH) and 232–308 (NRTL…SESK). Thr-143 carries the post-translational modification Phosphothreonine. Phosphoserine is present on residues Ser-152, Ser-156, and Ser-160. The segment covering 163–172 (GKTSAQTTPS) has biased composition (polar residues). Thr-170 is modified (phosphothreonine). A compositionally biased stretch (basic residues) spans 175 to 186 (PRYKGQGKKKTS). A Phosphoserine modification is found at Ser-202. Low complexity predominate over residues 205–218 (SVSLSEPKSKSSLH). Position 234 is a phosphothreonine (Thr-234). Residues 245–256 (PDEDDMEGDSFF) show a composition bias toward acidic residues. Over residues 259–275 (PIPKPEKTYGLRKEPRK) the composition is skewed to basic and acidic residues. Positions 286–302 (APPLKSGLSSLAGAPSL) are enriched in low complexity. Residues Ser-301 and Ser-326 each carry the phosphoserine modification. The disordered stretch occupies residues 331–353 (TGEDDDYVDDFNSTSHRSEKSEI). Tyr-337 carries the post-translational modification Phosphotyrosine.

This sequence belongs to the CEP43 family. As to quaternary structure, homodimer. Part of a ternary complex that contains CEP350, CEP43 and MAPRE1. Interacts directly with CEP350 and MAPRE1. Interacts with CEP19. Interacts (via N-terminus) with CEP350 (via C-terminus). In terms of tissue distribution, ubiquitous. Highly expressed in heart, liver, muscle, kidney, intestine, colon, adrenal gland, prostate, testis, and pancreas.

The protein resides in the cytoplasm. Its subcellular location is the cytoskeleton. It is found in the microtubule organizing center. The protein localises to the centrosome. It localises to the centriole. The protein resides in the cilium basal body. Functionally, required for anchoring microtubules to the centrosomes. Required for ciliation. The polypeptide is Centrosomal protein 43 (Homo sapiens (Human)).